We begin with the raw amino-acid sequence, 61 residues long: Potassium channel toxin alpha-KTx 18.1 (61 aa).

An N-terminal signal peptide occupies residues 1-24; sequence MRFTGIILILISMTLIDSFFEMKV. Intrachain disulfides connect Cys33–Cys52, Cys38–Cys57, and Cys42–Cys59.

Expressed by the venom gland.

It is found in the secreted. Its function is as follows. Reversible blocker of both Kv1.3/KCNA3 potassium channels (high affinity) and Shaker B (mammalian Kv1.1 analog) potassium channels (very low affinity). This Tityus obscurus (Amazonian scorpion) protein is Potassium channel toxin alpha-KTx 18.1.